The chain runs to 231 residues: Cytolethal distending toxin subunit A (231 aa).

Positions 1–15 (MRLLFFLLITLLFAA) are cleaved as a signal peptide. The N-palmitoyl cysteine moiety is linked to residue Cys-16. Cys-16 is lipidated: S-diacylglycerol cysteine. The tract at residues 20–51 (PKVHQPKHSSKTEKDLGIGLSPTPPPNERIPG) is disordered. Residues 99-110 (WALKPRNWVWGY) are mediates binding to target cells. One can recognise a Ricin B-type lectin domain in the interval 130-217 (SNGQVIIKNM…SSNLDQQWYI (88 aa)).

As to quaternary structure, heterotrimer of 3 subunits, CdtA, CdtB and CdtC.

It localises to the cell outer membrane. CDTs are cytotoxins which induce cell distension, growth arrest in G2/M phase, nucleus swelling, and chromatin fragmentation in HeLa cells. The sequence is that of Cytolethal distending toxin subunit A (cdtA) from Helicobacter hepaticus (strain ATCC 51449 / 3B1).